A 465-amino-acid polypeptide reads, in one-letter code: Phosphatidylserine synthase 1 (465 aa).

The Cytoplasmic segment spans residues 1-35 (MVSAMRSRTLSKDDVNYKMHFRMINEQQVEDITID). Residues 36-56 (FFYKPHTITLLTFTTVSLMYF) form a helical membrane-spanning segment. At 57 to 68 (AFTRENTSQEDN) the chain is on the lumenal side. Residues 69 to 89 (IWKGILSVIFFFLIISVLAFP) traverse the membrane as a helical segment. The Cytoplasmic segment spans residues 90–102 (NGPFTRPHPAIWR). Residues 103-123 (MVFGLSVLYFLFLVFLLFLNV) traverse the membrane as a helical segment. Residues 124–186 (EQVKAVMYWL…AMKALLIRSY (63 aa)) are Lumenal-facing. Residues 187-207 (GLCWTISITWEMTELFFMHLL) form a helical membrane-spanning segment. The Cytoplasmic segment spans residues 208–216 (PNFAECWWD). Residues 217 to 237 (QVILDILLCNGGGILLGMVVC) form a helical membrane-spanning segment. Residues 238-286 (RFLEMRTYHWASFKDIHTTTGKIKRAVLQFTPASWIYVRWFDPKSSFQR) are Lumenal-facing. A helical membrane pass occupies residues 287–307 (VAGVYLFMIIWQLTELNTFFL). Residues 308-319 (KHIFVFQASHPL) lie on the Cytoplasmic side of the membrane. Residues 320 to 342 (SWCRILFIGIITAPTVRQYYAYL) traverse the membrane as a helical segment. Topologically, residues 343–355 (TDTQCKRVGTQCW) are lumenal. A helical membrane pass occupies residues 356–376 (VFGAIAFLEATVCIKFGQDLF). Over 377 to 383 (SKTHLLY) the chain is Cytoplasmic. Residues 384-404 (VFLWLFSVAVITFLCLYGMVW) traverse the membrane as a helical segment. The Lumenal portion of the chain corresponds to 405–465 (YADYCGQREK…GKVTNGVGKK (61 aa)). The segment at 440 to 465 (PVKQNEGTSRRKNRHKGKVTNGVGKK) is disordered. Residues 449-465 (RRKNRHKGKVTNGVGKK) are compositionally biased toward basic residues.

Belongs to the phosphatidyl serine synthase family.

It is found in the endoplasmic reticulum membrane. The catalysed reaction is a 1,2-diacyl-sn-glycero-3-phosphoethanolamine + L-serine = a 1,2-diacyl-sn-glycero-3-phospho-L-serine + ethanolamine. It carries out the reaction a 1,2-diacyl-sn-glycero-3-phosphocholine + L-serine = a 1,2-diacyl-sn-glycero-3-phospho-L-serine + choline. Its pathway is phospholipid metabolism; phosphatidylserine biosynthesis. Functionally, catalyzes a base-exchange reaction in which the polar head group of phosphatidylethanolamine (PE) or phosphatidylcholine (PC) is replaced by L-serine. Catalyzes mainly the conversion of phosphatidylcholine but also converts, in vitro and to a lesser extent, phosphatidylethanolamine. In Xenopus tropicalis (Western clawed frog), this protein is Phosphatidylserine synthase 1 (ptdss1).